A 346-amino-acid chain; its full sequence is GTPase Obg (346 aa).

The Obg domain maps to 1–159; that stretch reads MKFLDSAKIY…RTVLLRLKLI (159 aa). Positions 160-327 constitute an OBG-type G domain; sequence ADAGLVGLPN…ALRAVLAEID (168 aa). Residues 166–173, 191–195, 212–215, 279–282, and 308–310 each bind GTP; these read GLPNAGKS, FTTLN, DIPG, SKVD, and SAA. Residues S173 and T193 each contribute to the Mg(2+) site.

Belongs to the TRAFAC class OBG-HflX-like GTPase superfamily. OBG GTPase family. As to quaternary structure, monomer. It depends on Mg(2+) as a cofactor.

It is found in the cytoplasm. Its function is as follows. An essential GTPase which binds GTP, GDP and possibly (p)ppGpp with moderate affinity, with high nucleotide exchange rates and a fairly low GTP hydrolysis rate. Plays a role in control of the cell cycle, stress response, ribosome biogenesis and in those bacteria that undergo differentiation, in morphogenesis control. This Methylocella silvestris (strain DSM 15510 / CIP 108128 / LMG 27833 / NCIMB 13906 / BL2) protein is GTPase Obg.